A 266-amino-acid polypeptide reads, in one-letter code: GATA-type zinc finger protein 1 (266 aa).

Disordered stretches follow at residues 1–31, 106–129, and 171–191; these read MEAAQAGDLTRRQELLAPPCLDTESLRKSRP, TQCPNLEISSATSPASLQRRPRKQ, and CSQKLPASPSKALASPGSSEA. Over residues 106 to 121 the composition is skewed to polar residues; it reads TQCPNLEISSATSPAS. The GATA-type zinc finger occupies 197 to 221; sequence CASCRTQRTPLWRDAEDGTPLCNAC.

Specifically expressed in adult testis and ovary. Expressed at high levels in the somatic cells of the developing gonads, including Leydig cells in the testes and granulosa cells in the ovaries.

It is found in the nucleus. Transcriptional regulator that plays a key role in germ cell development. Determines the oogenic fate by activating key genes for the oogenic program and meiotic prophase entry. Acts downstream of bone morphogenetic protein (BMP) by regulating expression of genes required for the oogenic programs, which are repressed by Polycomb activities in sexually uncommitted germ cells. Regulates expression of STRA8, a central downstream effector for the meiotic program. Acts independently of retinoic acid (RA). In males, not required for germ-cell sex determination, but required to allow the spermatogonia to efficiently accomplish the meiotic prophase. The chain is GATA-type zinc finger protein 1 from Mus musculus (Mouse).